A 216-amino-acid chain; its full sequence is Lipoprotein-releasing system ATP-binding protein LolD (216 aa).

The ABC transporter domain occupies isoleucine 2–isoleucine 216. Residue glycine 34–threonine 41 coordinates ATP.

This sequence belongs to the ABC transporter superfamily. Lipoprotein translocase (TC 3.A.1.125) family. The complex is composed of two ATP-binding proteins (LolD) and two transmembrane proteins (LolC and LolE).

The protein localises to the cell inner membrane. Part of the ABC transporter complex LolCDE involved in the translocation of mature outer membrane-directed lipoproteins, from the inner membrane to the periplasmic chaperone, LolA. Responsible for the formation of the LolA-lipoprotein complex in an ATP-dependent manner. In Bacteroides fragilis (strain YCH46), this protein is Lipoprotein-releasing system ATP-binding protein LolD.